Here is a 491-residue protein sequence, read N- to C-terminus: UDP-N-acetylmuramate--L-alanine ligase (491 aa).

Position 126 to 132 (126 to 132 (GTHGKTT)) interacts with ATP.

It belongs to the MurCDEF family.

Its subcellular location is the cytoplasm. The catalysed reaction is UDP-N-acetyl-alpha-D-muramate + L-alanine + ATP = UDP-N-acetyl-alpha-D-muramoyl-L-alanine + ADP + phosphate + H(+). Its pathway is cell wall biogenesis; peptidoglycan biosynthesis. Cell wall formation. The polypeptide is UDP-N-acetylmuramate--L-alanine ligase (Escherichia coli O1:K1 / APEC).